The sequence spans 885 residues: MGPRYGGAPALLLPLLLLLQVSSGLCQEPEPCRPGFGADSYTFTVPRRHLERGRVLGRVSFEGCTGLPRTAYVSDDTRFKVGTDGVITVKRPLQLHKPEISFLVHAWDSSRRKLSTRVRLKAATHHHHHHHDAPSKTQTEVLTFPSSQHGLRRQKRDWVIPPISCPENEKGPFPKNLVQIKSNRDKEIKVFYSITGQGADAPPVGVFIIERETGWLKVTEPLDREQIAKYILYSHAVSSNGNAVEDPMEIVITVTDQNDNKPEFTQAVFQGSVTEGALPGTSVMQVTATDADDDVNTYNAAIAYSILTQDPLLPSSMMFTINKDTGVISVLTTGLDREGVPMYTLVVQAADLQGEGLTTTATAVITVTDINDNPPIFNPTTYQGRVPENKANVEIAVLKVTDADVPDTPAWRAVYTILNNNNDQFVVTTDPVTNDGILKTTKGLDFEDKQQYVLYVTVVNVTPFEVILSTSTATVTVDVEDVNEAPIFIPCPKVVSIPEDFGVGQEITSYTAEDPDTYMEQRITYRIWRDAAGWLEVNPESGAIFTRAELDREDFEHVKNSTYEALIIAIDNGSPVATGTGTLLLVLSDVNDNGPIPEPRNMDFCQKNPQPHVINIIDPDLPPNTSPFTAELTHGASVNWTIEYNDPARESLILKPKKTLELGDYKINLKLTDNQNKDQVTTLDVFVCDCEGVVNSCKRTAPYAEAGLQVPAILGILGGILALLILILLLLLFVRRRRVVKEPLLPPEDDTRDNVYYYDEEGGGEEDQDFDLSQLHRGLDARPEVTRNDVAPTLLSVPQYRPRPANPDEIGNFIDENLKAADTDPTAPPYDSLLVFDYEGSGSEAASLSSLNSSESDQDQDYDYLNEWGNRFKKLADMYGGGEDD.

Residues 1-26 (MGPRYGGAPALLLPLLLLLQVSSGLC) form the signal peptide. Residues 27 to 156 (QEPEPCRPGF…SQHGLRRQKR (130 aa)) constitute a propeptide that is removed on maturation. Residues 121–131 (KAATHHHHHHH) are compositionally biased toward basic residues. The disordered stretch occupies residues 121–141 (KAATHHHHHHHDAPSKTQTEV). The Extracellular portion of the chain corresponds to 157-712 (DWVIPPISCP…YAEAGLQVPA (556 aa)). 5 Cadherin domains span residues 158–264 (WVIP…KPEF), 265–377 (TQAV…PPIF), 378–488 (NPTT…APIF), 489–597 (IPCP…GPIP), and 607–688 (KNPQ…VFVC). Asp259 provides a ligand contact to Ca(2+). Ser282 is a glycosylation site (O-linked (Man...) serine). The O-linked (Man...) threonine glycan is linked to Thr287. A Ca(2+)-binding site is contributed by Asp290. Thr360, Thr472, Thr474, and Thr511 each carry an O-linked (Man...) threonine glycan. N-linked (GlcNAc...) asparagine glycosylation occurs at Asn560. Thr578, Thr580, and Thr582 each carry an O-linked (Man...) threonine glycan. Asn639 carries an N-linked (GlcNAc...) asparagine glycan. Residues 713 to 733 (ILGILGGILALLILILLLLLF) form a helical membrane-spanning segment. Residues 734–885 (VRRRRVVKEP…ADMYGGGEDD (152 aa)) lie on the Cytoplasmic side of the membrane. Residues 750–770 (DTRDNVYYYDEEGGGEEDQDF) are disordered. Residues Tyr756, Tyr757, and Tyr758 each carry the phosphotyrosine; by SRC modification. Residues 758–770 (YDEEGGGEEDQDF) show a composition bias toward acidic residues. The tract at residues 761–772 (EGGGEEDQDFDL) is required for binding CTNND1 and PSEN1. Phosphoserine occurs at positions 773, 796, 841, 843, and 849. Residues 792 to 811 (PTLLSVPQYRPRPANPDEIG) are disordered. A required for binding alpha, beta and gamma catenins region spans residues 814-885 (IDENLKAADT…ADMYGGGEDD (72 aa)).

Homodimer; disulfide-linked. Component of an E-cadherin/ catenin adhesion complex composed of at least E-cadherin/CDH1, beta-catenin/CTNNB1 or gamma-catenin/JUP, and potentially alpha-catenin/CTNNA1; the complex is located to adherens junctions. Found in a complex composed of CDH1, RAP1A and PKP3; PKP3 acts as a scaffold protein within the complex, the complex is required for CDH1 localization to mature desmosome cell junctions. Interacts with the TRPV4 and CTNNB1 complex. Interacts with CTNND1. The stable association of CTNNA1 is controversial as CTNNA1 was shown not to bind to F-actin when assembled in the complex. Alternatively, the CTNNA1-containing complex may be linked to F-actin by other proteins such as LIMA1. Interaction with PSEN1, cleaves CDH1 resulting in the disassociation of cadherin-based adherens junctions (CAJs). Interacts with AJAP1 and DLGAP5. Interacts with TBC1D2. Interacts with LIMA1. Interacts with CAV1. Interacts with PIP5K1C. Interacts with RAB8B. Interacts with DDR1; this stabilizes CDH1 at the cell surface and inhibits its internalization. Interacts with RAPGEF2. Interacts with KLRG1. Forms a ternary complex composed of ADAM10, CADH1 and EPHA4; within the complex, CADH1 is cleaved by ADAM10 which disrupts adherens junctions. Interacts with SPEF1. Interacts with CTNNB1 and PKP2. Interacts with AMOTL2; the interaction may facilitate binding of radial actin fibers to cell junction complexes. Interacts with DSG3; the interaction is required for CDH1 localization to developing adherens junctions. In terms of processing, during apoptosis or with calcium influx, cleaved by a membrane-bound metalloproteinase (ADAM10), PS1/gamma-secretase and caspase-3. Processing by the metalloproteinase, induced by calcium influx, causes disruption of cell-cell adhesion and the subsequent release of beta-catenin into the cytoplasm. The residual membrane-tethered cleavage product is rapidly degraded via an intracellular proteolytic pathway. Cleavage by caspase-3 releases the cytoplasmic tail resulting in disintegration of the actin microfilament system. The gamma-secretase-mediated cleavage promotes disassembly of adherens junctions. During development of the cochlear organ of Corti, cleavage by ADAM10 at adherens junctions promotes pillar cell separation. Post-translationally, N-glycosylation at Asn-639 is essential for expression, folding and trafficking. Addition of bisecting N-acetylglucosamine by MGAT3 modulates its cell membrane location. Ubiquitinated by a SCF complex containing SKP2, which requires prior phosphorylation by CK1/CSNK1A1. Ubiquitinated by CBLL1/HAKAI, requires prior phosphorylation at Tyr-757. In terms of processing, O-glycosylated. O-manosylated by TMTC1, TMTC2, TMTC3 or TMTC4. Thr-287 and Thr-511 are O-mannosylated by TMTC2 or TMTC4 but not TMTC1 or TMTC3.

The protein resides in the cell junction. It is found in the adherens junction. Its subcellular location is the cell membrane. The protein localises to the endosome. It localises to the golgi apparatus. The protein resides in the trans-Golgi network. It is found in the cytoplasm. Its subcellular location is the desmosome. In terms of biological role, cadherins are calcium-dependent cell adhesion proteins. They preferentially interact with themselves in a homophilic manner in connecting cells; cadherins may thus contribute to the sorting of heterogeneous cell types. CDH1 is involved in mechanisms regulating cell-cell adhesions, mobility and proliferation of epithelial cells. Promotes organization of radial actin fiber structure and cellular response to contractile forces, via its interaction with AMOTL2 which facilitates anchoring of radial actin fibers to CDH1 junction complexes at the cell membrane. Plays a role in the early stages of desmosome cell-cell junction formation via facilitating the recruitment of DSG2 and DSP to desmosome plaques. Has a potent invasive suppressor role. It is a ligand for integrin alpha-E/beta-7. Functionally, E-Cad/CTF2 promotes non-amyloidogenic degradation of Abeta precursors. Has a strong inhibitory effect on APP C99 and C83 production. This is Cadherin-1 (CDH1) from Canis lupus familiaris (Dog).